The following is a 421-amino-acid chain: ATP-dependent RNA helicase RhlB (421 aa).

The short motif at 9 to 37 is the Q motif element; that stretch reads QKFSDFALHPKVVEALEKKGFHNCTPIQA. One can recognise a Helicase ATP-binding domain in the interval 40-219; it reads LPLTLAGRDV…FEQMNNAEYI (180 aa). 53-60 contacts ATP; it reads AQTGTGKT. Positions 165-168 match the DEAD box motif; it reads DEAD. The Helicase C-terminal domain maps to 245 to 390; that stretch reads RLLQTLIEEE…VSKYNPDALM (146 aa). Residues 392–421 form a disordered region; that stretch reads DLPKPLRLTRPRTGNGPRRTGTPRNRRRSG. Residues 402–414 show a composition bias toward low complexity; the sequence is PRTGNGPRRTGTP.

It belongs to the DEAD box helicase family. RhlB subfamily. In terms of assembly, component of the RNA degradosome, which is a multiprotein complex involved in RNA processing and mRNA degradation.

Its subcellular location is the cytoplasm. It catalyses the reaction ATP + H2O = ADP + phosphate + H(+). Functionally, DEAD-box RNA helicase involved in RNA degradation. Has RNA-dependent ATPase activity and unwinds double-stranded RNA. The chain is ATP-dependent RNA helicase RhlB from Escherichia coli O17:K52:H18 (strain UMN026 / ExPEC).